Here is a 674-residue protein sequence, read N- to C-terminus: Nucleoporin NDC1 (674 aa).

At 1–24 the chain is on the cytoplasmic side; it reads MATAVSRPCAGRSRDILWRVLGWR. The chain crosses the membrane as a helical span at residues 25 to 45; it reads IVASIVWSVLFLPICTTVFII. At 46–68 the chain is on the perinuclear space side; that stretch reads FSRIDLFHPIQWLSDSFSDLYSS. Residues 69–89 form a helical membrane-spanning segment; that stretch reads YVIFYFLLLSVVIIIISIFNV. The Cytoplasmic portion of the chain corresponds to 90 to 114; it reads EFYAVVPSIPCSRLALIGKIIHPQQ. The chain crosses the membrane as a helical span at residues 115 to 135; the sequence is LMHSFIHAAMGMVMAWCAAVI. The Perinuclear space segment spans residues 136–165; that stretch reads TQGQYSFLVVPCTGTNSFGSPAAQTCLNEY. A helical membrane pass occupies residues 166 to 186; the sequence is HLFFLLTGAFMGYSYSLLYFV. Residues 187 to 225 are Cytoplasmic-facing; sequence NNMNYLPFPIIQQYKFLRFRRSLLLLVKHSCVESLFLVR. Residues 226–246 form a helical membrane-spanning segment; the sequence is NFCILYYFLGYIPKAWISTAM. Over 247–272 the chain is Perinuclear space; that stretch reads NLHIDEQVHRPLDTVSGLLNLSLLYH. Residues 273-293 traverse the membrane as a helical segment; it reads VWLCGVFLLTTWYVSWILFKI. The Cytoplasmic segment spans residues 294 to 674; sequence YATEAHVFPV…RLQQFLEFKE (381 aa). The tract at residues 394–425 is disordered; it reads SSSYPVEPKKLNSPEETAFQTPKSSQMPRPSV. Ser-406 carries the phosphoserine modification. A compositionally biased stretch (polar residues) spans 407–421; the sequence is PEETAFQTPKSSQMP. Residue Thr-414 is modified to Phosphothreonine. At Ser-439 the chain carries Phosphoserine. Thr-440 is subject to Phosphothreonine. At Ser-445 the chain carries Phosphoserine. The residue at position 449 (Thr-449) is a Phosphothreonine. Phosphoserine is present on residues Ser-471 and Ser-474.

It belongs to the NDC1 family. In terms of assembly, interacts with the NUP35/NUP53. Interacts with AAAS, anchoring it to the nuclear envelope.

The protein resides in the nucleus. The protein localises to the nuclear pore complex. Its subcellular location is the nucleus membrane. In terms of biological role, component of the nuclear pore complex (NPC), which plays a key role in de novo assembly and insertion of NPC in the nuclear envelope. Required for NPC and nuclear envelope assembly, possibly by forming a link between the nuclear envelope membrane and soluble nucleoporins, thereby anchoring the NPC in the membrane. The protein is Nucleoporin NDC1 (NDC1) of Homo sapiens (Human).